A 1106-amino-acid polypeptide reads, in one-letter code: Probable ATP-citrate synthase (1106 aa).

3 residues coordinate citrate: asparagine 358, threonine 360, and arginine 391. Residues 442-459 show a composition bias toward polar residues; sequence APQTTGQFLLSPERNTGG. Positions 442–478 are disordered; it reads APQTTGQFLLSPERNTGGTERAPPSPAANATPTEHPL. ATP is bound by residues 701–721 and 752–778; these read VIRY…EVGG and ITSE…KNAA. Glutamate 718 lines the Mg(2+) pocket. The active-site Tele-phosphohistidine intermediate is the histidine 760. 779-789 serves as a coordination point for CoA; that stretch reads LRASGALVPES.

It in the N-terminal section; belongs to the succinate/malate CoA ligase beta subunit family. This sequence in the C-terminal section; belongs to the succinate/malate CoA ligase alpha subunit family. As to quaternary structure, homotetramer.

Its subcellular location is the cytoplasm. The enzyme catalyses oxaloacetate + acetyl-CoA + ADP + phosphate = citrate + ATP + CoA. Catalyzes the cleavage of citrate into oxaloacetate and acetyl-CoA, the latter serving as common substrate in multiple biochemical reactions in protein, carbohydrate and lipid metabolism. The polypeptide is Probable ATP-citrate synthase (Caenorhabditis elegans).